The sequence spans 341 residues: Ribose-phosphate pyrophosphokinase 5 (341 aa).

The Mg(2+) site is built by D152, H154, and D167.

It belongs to the ribose-phosphate pyrophosphokinase family.

The protein localises to the cytoplasm. It carries out the reaction D-ribose 5-phosphate + ATP = 5-phospho-alpha-D-ribose 1-diphosphate + AMP + H(+). It participates in metabolic intermediate biosynthesis; 5-phospho-alpha-D-ribose 1-diphosphate biosynthesis; 5-phospho-alpha-D-ribose 1-diphosphate from D-ribose 5-phosphate (route I): step 1/1. In terms of biological role, 5-phosphoribose 1-diphosphate synthase involved in nucleotide, histidine, and tryptophan biosynthesis. Active in heteromultimeric complexes with other 5-phosphoribose 1-diphosphate synthases. This Schizosaccharomyces pombe (strain 972 / ATCC 24843) (Fission yeast) protein is Ribose-phosphate pyrophosphokinase 5.